Reading from the N-terminus, the 244-residue chain is tRNA (guanine-N(1)-)-methyltransferase (244 aa).

S-adenosyl-L-methionine contacts are provided by residues glycine 112 and 131-136; that span reads LGDFIL. The disordered stretch occupies residues 211 to 244; sequence IKRTSDRRPDLLEKWQQEKKPGSREQGSREQGEK.

Belongs to the RNA methyltransferase TrmD family. In terms of assembly, homodimer.

The protein localises to the cytoplasm. The enzyme catalyses guanosine(37) in tRNA + S-adenosyl-L-methionine = N(1)-methylguanosine(37) in tRNA + S-adenosyl-L-homocysteine + H(+). Specifically methylates guanosine-37 in various tRNAs. The sequence is that of tRNA (guanine-N(1)-)-methyltransferase from Trichormus variabilis (strain ATCC 29413 / PCC 7937) (Anabaena variabilis).